The following is a 321-amino-acid chain: Glucokinase (321 aa).

Residue 8–13 (GDVGGT) coordinates ATP.

It belongs to the bacterial glucokinase family.

The protein localises to the cytoplasm. It catalyses the reaction D-glucose + ATP = D-glucose 6-phosphate + ADP + H(+). This is Glucokinase from Psychromonas ingrahamii (strain DSM 17664 / CCUG 51855 / 37).